A 399-amino-acid polypeptide reads, in one-letter code: Putative 3'-5' exonuclease R431 (399 aa).

The 3'-5' exonuclease domain maps to 118–297 (FQIVDNWIEN…IYNELQLMTN (180 aa)). The R3H domain maps to 335-399 (ERRLKSIESK…NKYVIITRHC (65 aa)).

This is Putative 3'-5' exonuclease R431 from Acanthamoeba polyphaga (Amoeba).